A 530-amino-acid polypeptide reads, in one-letter code: Protein P80 (530 aa).

Positions 1-22 (MKVISGLLFFILISCSLFLVQG) are cleaved as a signal peptide. A helical membrane pass occupies residues 491-511 (MLVAMTFNVALFFAVIAGVLV).

This sequence belongs to the SLC31A transporter family.

Its subcellular location is the late endosome membrane. The chain is Protein P80 (p80) from Dictyostelium discoideum (Social amoeba).